A 359-amino-acid chain; its full sequence is Putative nucleotidyltransferase MAB21L1 (359 aa).

A ribonucleoside 5'-triphosphate contacts are provided by residues 23–24 (RK) and 63–66 (YEGL). The Mg(2+) site is built by Glu73 and Glu75. A ribonucleoside 5'-triphosphate is bound by residues Lys248 and 252–255 (SLLK).

It belongs to the mab-21 family. In terms of assembly, monomer. Homodecamer; composed of 2 back to back homopentamers. The protein may exist as monomer in solution and oiligomerizes upon ligand binding.

The protein localises to the nucleus. Functionally, putative nucleotidyltransferase required for several aspects of embryonic development including normal development of the eye. It is unclear whether it displays nucleotidyltransferase activity in vivo. Binds single-stranded RNA (ssRNA). This is Putative nucleotidyltransferase MAB21L1 (mab21l1) from Xenopus laevis (African clawed frog).